Reading from the N-terminus, the 340-residue chain is Lipase chaperone (340 aa).

A helical membrane pass occupies residues 4-24; it reads ILLLIPLAFAASLAWFVWLEP. The segment at 29–51 is disordered; it reads ETAPPASPQAGADRAPPAASAGE. Over residues 36–51 the composition is skewed to low complexity; that stretch reads PQAGADRAPPAASAGE.

It belongs to the lipase chaperone family.

Its subcellular location is the cell inner membrane. In terms of biological role, may be involved in the folding of the extracellular lipase during its passage through the periplasm. This is Lipase chaperone (lifO) from Pseudomonas aeruginosa (strain ATCC 15692 / DSM 22644 / CIP 104116 / JCM 14847 / LMG 12228 / 1C / PRS 101 / PAO1).